Consider the following 518-residue polypeptide: MIPDVSQALAWLEKHPQALKGIQRGLERETLRVNADGTLATTGHPEALGSALTHKWITTDFAEALLEFITPVDGDIQHMLTFMRDLHRYTARKLGDERMWPLSMPCYIAEGQDIELAQYGTSNTGRFKTLYREGLKNRYGALMQTISGVHYNFSLPMAFWQAKCGVTEGEAAKEKISAGYFRLIRNYYRFGWVIPYLFGASPAICSSFLQGKPTTLPFEKTDCGMYYLPYATSLRLSDLGYTNKSQSNLGITFNDLHEYVAGLKRAIKTPSEEYARIGVEKDGKRLQINSNVLQIENELYAPIRPKRVTRSGESPSDALLRGGIEYIEVRSLDINPFSPIGVDEQQLRFLDLFMVWCVLADAPEMSSDELLCTRTNWNRVILEGRKPGLTLGIGCETAQFPLPKVGKDLFRDLKRVAQTLDSIHGGEEYQKVCDELVACFDNPELTFSARILRSMIDEGIGGTGKAFGEAYRNLLREEPLEILQEEEFIAERDASVRRQQEIEAADTEPFAAWLAKHA.

It belongs to the glutamate--cysteine ligase type 1 family. Type 1 subfamily.

The enzyme catalyses L-cysteine + L-glutamate + ATP = gamma-L-glutamyl-L-cysteine + ADP + phosphate + H(+). Its pathway is sulfur metabolism; glutathione biosynthesis; glutathione from L-cysteine and L-glutamate: step 1/2. The polypeptide is Glutamate--cysteine ligase (Salmonella paratyphi C (strain RKS4594)).